The primary structure comprises 46 residues: uncharacterized protein (46 aa).

A helical transmembrane segment spans residues 12-34; it reads HFNHFVIALSFIYGLTELGYLLL.

Its subcellular location is the cell membrane. This is an uncharacterized protein from Bacillus subtilis (strain 168).